A 202-amino-acid chain; its full sequence is Probable cobalt-precorrin-6B C(15)-methyltransferase (decarboxylating) (202 aa).

S-adenosyl-L-methionine contacts are provided by residues Thr29, Gly53–Gly57, Asp77, and Val106.

Belongs to the methyltransferase superfamily. Archaeal-type CbiT family.

It catalyses the reaction Co-precorrin-6B + S-adenosyl-L-methionine = Co-precorrin-7 + S-adenosyl-L-homocysteine + CO2. The protein operates within cofactor biosynthesis; adenosylcobalamin biosynthesis; cob(II)yrinate a,c-diamide from sirohydrochlorin (anaerobic route): step 8/10. Its function is as follows. Catalyzes the methylation of C-15 in cobalt-precorrin-6B followed by the decarboxylation of C-12 to form cobalt-precorrin-7. In Thermoplasma acidophilum (strain ATCC 25905 / DSM 1728 / JCM 9062 / NBRC 15155 / AMRC-C165), this protein is Probable cobalt-precorrin-6B C(15)-methyltransferase (decarboxylating).